Consider the following 76-residue polypeptide: Putative snRNP Sm-like protein (76 aa).

In terms of domain architecture, Sm spans 4–76; the sequence is RPLDVIHKSL…VLAISPVEIE (73 aa).

It belongs to the snRNP Sm proteins family.

This Thermococcus sibiricus (strain DSM 12597 / MM 739) protein is Putative snRNP Sm-like protein.